A 556-amino-acid polypeptide reads, in one-letter code: Formate--tetrahydrofolate ligase (556 aa).

65–72 (TPAGEGKT) serves as a coordination point for ATP.

This sequence belongs to the formate--tetrahydrofolate ligase family.

It catalyses the reaction (6S)-5,6,7,8-tetrahydrofolate + formate + ATP = (6R)-10-formyltetrahydrofolate + ADP + phosphate. It functions in the pathway one-carbon metabolism; tetrahydrofolate interconversion. This chain is Formate--tetrahydrofolate ligase, found in Carboxydothermus hydrogenoformans (strain ATCC BAA-161 / DSM 6008 / Z-2901).